Reading from the N-terminus, the 2703-residue chain is Neurogenic locus Notch protein (2703 aa).

The N-terminal stretch at 1–52 (MQSQRSRRRSRAPNTWICFWINKMHAVASLPASLPLLLLTLAFANLPNTVRG) is a signal peptide. Over 53-1745 (TDTALVAASC…NGEPPANVKY (1693 aa)) the chain is Extracellular. EGF-like domains lie at 58–95 (VAASCTSVGCQNGGTCVTQLNGKTYCACDSHYVGDYCE), 96–136 (HRNP…SLCE), 139–176 (VPNACDHVTCLNGGTCQLKTLEEYTCACANGYTGERCE), and 177–215 (TKNLCASSPCRNGATCTALAGSSSFTCSCPPGFTGDTCS). 24 disulfide bridges follow: cysteine 62/cysteine 73, cysteine 67/cysteine 83, cysteine 85/cysteine 94, cysteine 100/cysteine 111, cysteine 105/cysteine 124, cysteine 126/cysteine 135, cysteine 143/cysteine 154, cysteine 148/cysteine 164, cysteine 166/cysteine 175, cysteine 181/cysteine 192, cysteine 186/cysteine 203, cysteine 205/cysteine 214, cysteine 221/cysteine 232, cysteine 226/cysteine 241, cysteine 243/cysteine 252, cysteine 259/cysteine 270, cysteine 264/cysteine 279, cysteine 281/cysteine 290, cysteine 297/cysteine 308, cysteine 302/cysteine 317, cysteine 319/cysteine 328, cysteine 335/cysteine 349, cysteine 343/cysteine 358, and cysteine 360/cysteine 369. Threonine 72 carries an O-linked (Fuc...) threonine glycan. Threonine 110 is a glycosylation site (O-linked (Fuc...) threonine). The O-linked (Fuc...) threonine glycan is linked to threonine 153. Serine 183 carries an O-linked (Glc...) serine glycan. The O-linked (Fuc...) threonine glycan is linked to threonine 191. Threonine 210 carries an O-linked (GlcNAc...) threonine glycan. Positions 217–253 (DIEECQSNPCKYGGTCVNTHGSYQCMCPTGYTGKDCD) constitute an EGF-like 5; calcium-binding domain. Serine 223 carries O-linked (Glc...) serine glycosylation. Threonine 231 carries O-linked (Fuc...) threonine glycosylation. In terms of domain architecture, EGF-like 6 spans 255–291 (KYKPCSPSPCQNGGICRSNGLSYECKCPKGFEGKNCE). The EGF-like 7; calcium-binding domain maps to 293 to 329 (NYDDCLGHLCQNGGTCIDGISDYTCRCPPNFTGRFCQ). Threonine 307 carries O-linked (Fuc...) threonine glycosylation. Asparagine 322 carries an N-linked (GlcNAc...) asparagine glycan. One can recognise an EGF-like 8; calcium-binding domain in the interval 331-370 (DVDECAQRDHPVCQNGATCTNTHGSYSCICVNGWAGLDCS). O-linked (Fuc...) threonine glycosylation is present at threonine 348. N-linked (GlcNAc...) asparagine glycosylation occurs at asparagine 371. The 37-residue stretch at 372–408 (NTDDCKQAACFYGATCIDGVGSFYCQCTKGKTGLLCH) folds into the EGF-like 9; calcium-binding domain. 8 cysteine pairs are disulfide-bonded: cysteine 376-cysteine 387, cysteine 381-cysteine 396, cysteine 398-cysteine 407, cysteine 413-cysteine 424, cysteine 418-cysteine 435, cysteine 437-cysteine 446, cysteine 453-cysteine 465, and cysteine 459-cysteine 474. A glycan (O-linked (Fuc...) threonine) is linked at threonine 386. Positions 409 to 447 (LDDACTSNPCHADAICDTSPINGSYACSCATGYKGVDCS) constitute an EGF-like 10 domain. Serine 427 carries O-linked (Glc...) serine glycosylation. N-linked (GlcNAc...) asparagine glycosylation occurs at asparagine 430. The EGF-like 11; calcium-binding domain occupies 449–486 (DIDECDQGSPCEHNGICVNTPGSYRCNCSQGFTGPRCE). An N-linked (GlcNAc...) asparagine glycan is attached at asparagine 475. Cystine bridges form between cysteine 476/cysteine 485, cysteine 492/cysteine 503, cysteine 497/cysteine 512, cysteine 514/cysteine 523, cysteine 530/cysteine 541, cysteine 535/cysteine 550, cysteine 552/cysteine 561, cysteine 568/cysteine 579, cysteine 573/cysteine 588, cysteine 590/cysteine 599, cysteine 606/cysteine 616, cysteine 611/cysteine 625, cysteine 627/cysteine 636, cysteine 643/cysteine 654, cysteine 648/cysteine 663, cysteine 665/cysteine 674, cysteine 681/cysteine 692, cysteine 686/cysteine 701, cysteine 703/cysteine 712, cysteine 719/cysteine 730, cysteine 724/cysteine 739, cysteine 741/cysteine 750, cysteine 757/cysteine 768, cysteine 762/cysteine 777, cysteine 779/cysteine 788, cysteine 795/cysteine 806, cysteine 800/cysteine 815, cysteine 817/cysteine 826, cysteine 833/cysteine 844, cysteine 838/cysteine 853, cysteine 855/cysteine 864, cysteine 871/cysteine 882, cysteine 876/cysteine 893, cysteine 895/cysteine 904, cysteine 911/cysteine 923, cysteine 917/cysteine 932, cysteine 934/cysteine 943, cysteine 950/cysteine 961, cysteine 955/cysteine 970, cysteine 972/cysteine 981, cysteine 988/cysteine 999, cysteine 993/cysteine 1008, cysteine 1010/cysteine 1019, cysteine 1026/cysteine 1037, cysteine 1031/cysteine 1046, cysteine 1048/cysteine 1057, cysteine 1064/cysteine 1075, cysteine 1069/cysteine 1084, cysteine 1086/cysteine 1095, cysteine 1102/cysteine 1113, cysteine 1107/cysteine 1122, cysteine 1124/cysteine 1133, cysteine 1155/cysteine 1160, cysteine 1171/cysteine 1180, cysteine 1187/cysteine 1198, cysteine 1192/cysteine 1207, cysteine 1209/cysteine 1218, cysteine 1225/cysteine 1236, cysteine 1230/cysteine 1245, cysteine 1247/cysteine 1256, cysteine 1263/cysteine 1274, cysteine 1268/cysteine 1283, cysteine 1285/cysteine 1294, cysteine 1301/cysteine 1314, cysteine 1306/cysteine 1323, cysteine 1325/cysteine 1334, cysteine 1341/cysteine 1352, cysteine 1346/cysteine 1361, cysteine 1363/cysteine 1372, cysteine 1379/cysteine 1389, cysteine 1384/cysteine 1400, cysteine 1402/cysteine 1411, cysteine 1419/cysteine 1430, cysteine 1424/cysteine 1439, cysteine 1441/cysteine 1450, cysteine 1482/cysteine 1505, cysteine 1487/cysteine 1500, and cysteine 1496/cysteine 1512. Residue threonine 481 is glycosylated (O-linked (GlcNAc...) threonine). In terms of domain architecture, EGF-like 12; calcium-binding spans 488–524 (NINECESHPCQNEGSCLDDPGTFRCVCMPGFTGTQCE). O-linked (Glc...) serine glycosylation occurs at serine 494. Serine 502 is a glycosylation site (O-linked (Fuc...) serine). An O-linked (GlcNAc...) threonine glycan is attached at threonine 519. Residues 526 to 562 (DIDECQSNPCLNDGTCHDKINGFKCSCALGFTGARCQ) enclose the EGF-like 13; calcium-binding domain. Serine 532 carries an O-linked (Glc...) serine glycan. Residues 564-600 (NIDDCQSQPCRNRGICHDSIAGYSCECPPGYTGTSCE) form the EGF-like 14; calcium-binding domain. A glycan (O-linked (Glc...) serine) is linked at serine 570. An O-linked (GlcNAc...) threonine glycan is attached at threonine 595. The region spanning 602–637 (NINDCDSNPCHRGKCIDDVNSFKCLCDPGYTGYICQ) is the EGF-like 15; calcium-binding domain. An O-linked (Glc...) serine glycan is attached at serine 608. The EGF-like 16; calcium-binding domain occupies 639–675 (QINECESNPCQFDGHCQDRVGSYYCQCQAGTSGKNCE). O-linked (Glc...) serine glycosylation occurs at serine 645. Residues 677 to 713 (NVNECHSNPCNNGATCIDGINSYKCQCVPGFTGQHCE) enclose the EGF-like 17; calcium-binding domain. Serine 683 carries an O-linked (Glc...) serine glycan. A glycan (O-linked (Fuc...) threonine) is linked at threonine 691. An EGF-like 18; calcium-binding domain is found at 715–751 (NVDECISSPCANNGVCIDQVNGYKCECPRGFYDAHCL). Residue serine 721 is glycosylated (O-linked (Glc...) serine). The EGF-like 19; calcium-binding domain occupies 753-789 (DVDECASNPCVNEGRCEDGINEFICHCPPGYTGKRCE). Residue serine 759 is glycosylated (O-linked (Glc...) serine). The 37-residue stretch at 791–827 (DIDECSSNPCQHGGTCYDKLNAFSCQCMPGYTGQKCE) folds into the EGF-like 20; calcium-binding domain. A glycan (O-linked (Glc...) serine) is linked at serine 797. The O-linked (Fuc...) threonine glycan is linked to threonine 805. O-linked (GlcNAc...) threonine glycosylation occurs at threonine 822. Positions 829-865 (NIDDCVTNPCGNGGTCIDKVNGYKCVCKVPFTGRDCE) constitute an EGF-like 21; calcium-binding domain. The O-linked (Fuc...) threonine glycan is linked to threonine 843. In terms of domain architecture, EGF-like 22 spans 867 to 905 (KMDPCASNRCKNEAKCTPSSNFLDFSCTCKLGYTGRYCD). An EGF-like 23; calcium-binding domain is found at 907–944 (DIDECSLSSPCRNGASCLNVPGSYRCLCTKGYEGRDCA). A glycan (O-linked (Fuc...) serine) is linked at serine 922. The EGF-like 24; calcium-binding domain occupies 946-982 (NTDDCASFPCQNGGTCLDGIGDYSCLCVDGFDGKHCE). Serine 952 carries an O-linked (Glc...) serine glycan. Threonine 960 carries an O-linked (Fuc...) threonine glycan. One can recognise an EGF-like 25 domain in the interval 984 to 1020 (DINECLSQPCQNGATCSQYVNSYTCTCPLGFSGINCQ). An O-linked (Glc...) serine glycan is attached at serine 990. Threonine 998 carries an O-linked (Fuc...) threonine glycan. Positions 1022 to 1058 (NDEDCTESSCLNGGSCIDGINGYNCSCLAGYSGANCQ) constitute an EGF-like 26; calcium-binding domain. The O-linked (Fuc...) serine glycan is linked to serine 1036. Asparagine 1045 carries an N-linked (GlcNAc...) asparagine glycan. EGF-like domains follow at residues 1060 to 1096 (KLNKCDSNPCLNGATCHEQNNEYTCHCPSGFTGKQCS), 1098 to 1134 (YVDWCGQSPCENGATCSQMKHQFSCKCSAGWTGKLCD), and 1136 to 1181 (QTIS…SYCQ). O-linked (Glc...) serine glycosylation occurs at serine 1066. Residue threonine 1074 is glycosylated (O-linked (Fuc...) threonine). Residue threonine 1112 is glycosylated (O-linked (Fuc...) threonine). Asparagine 1157 is a glycosylation site (N-linked (GlcNAc...) asparagine). Residues 1183–1219 (EIDECQSQPCQNGGTCRDLIGAYECQCRQGFQGQNCE) enclose the EGF-like 30; calcium-binding domain. The O-linked (Glc...) serine glycan is linked to serine 1189. An O-linked (Fuc...) threonine glycan is attached at threonine 1197. The EGF-like 31; calcium-binding domain occupies 1221 to 1257 (NIDDCAPNPCQNGGTCHDRVMNFSCSCPPGTMGIICE). Threonine 1235 carries an O-linked (Fuc...) threonine glycan. Asparagine 1242 carries an N-linked (GlcNAc...) asparagine glycan. Residues 1259 to 1295 (NKDDCKPGACHNNGSCIDRVGGFECVCQPGFVGARCE) enclose the EGF-like 32; calcium-binding domain. Residue asparagine 1271 is glycosylated (N-linked (GlcNAc...) asparagine). Serine 1273 carries an O-linked (Fuc...) serine glycan. 4 consecutive EGF-like domains span residues 1297 to 1335 (DINECLSNPCSNAGTLDCVQLVNNYHCNCRPGHMGRHCE), 1337 to 1373 (KVDFCAQSPCQNGGNCNIRQSGHHCICNNGFYGKNCE), 1375 to 1412 (SGQDCDSNPCRVGNCVVADEGFGYRCECPRGTLGEHCE), and 1415 to 1451 (TLDECSPNPCAQGAACEDLLGDYECLCPSKWKGKRCD). O-linked (Glc...) serine glycosylation is present at serine 1303. Serine 1381 carries an O-linked (Glc...) serine glycan. LNR repeat units follow at residues 1482 to 1521 (CDKRGCTEKQGNGICDSDCNTYACNFDGNDCSLGINPWAN), 1522 to 1557 (CTANECWNKFKNGKCNEECNNAACHYDGHDCERKLK), and 1559 to 1599 (CDSL…TQSP). A glycan (N-linked (GlcNAc...) asparagine) is linked at asparagine 1521. 6 disulfide bridges follow: cysteine 1522–cysteine 1545, cysteine 1527–cysteine 1540, cysteine 1536–cysteine 1552, cysteine 1559–cysteine 1585, cysteine 1567–cysteine 1580, and cysteine 1576–cysteine 1592. N-linked (GlcNAc...) asparagine glycosylation is found at asparagine 1594 and asparagine 1627. A helical membrane pass occupies residues 1746 to 1766 (VITGIILVIIALAFFGMVLST). Topologically, residues 1767–2703 (QRKRAHGVTW…ANKGSEAIYI (937 aa)) are cytoplasmic. Positions 1810–1850 (QSQGVGQPGAHWSDDESDMPLPKRQRSDPVSGVGLGNNGGY) are disordered. 7 ANK repeats span residues 1901-1945 (CGLT…ELNA), 1950-1979 (TGETSLHLAARFARADAAKRLLDAGADANC), 1983-2013 (TGRTPLHAAVAADAMGVFQILLRNRATNLNA), 2017-2046 (DGTTPLILAARLAIEGMVEDLITADADINA), 2050-2079 (SGKTALHWAAAVNNTEAVNILLMHHANRDA), 2083-2112 (KDETPLFLAAREGSYEACKALLDNFANREI), and 2116-2139 (MDRLPRDVASERLHHDIVRLLDEH). Positions 2172–2257 (TVISAGNGGN…LTGGVSGVPG (86 aa)) are disordered. Residues 2228-2238 (KKTSAASKKAA) are compositionally biased toward low complexity. The tract at residues 2325–2328 (PPSY) is interaction with Nedd4. Disordered regions lie at residues 2399 to 2452 (SGAG…PTSP), 2488 to 2524 (GGGGGGGVGQGPQNSPVSLGIISPTGSDMGIMLAPPQ), 2579 to 2620 (LDLN…PSSQ), and 2632 to 2703 (PSSQ…AIYI). Over residues 2414 to 2429 (PYSNQSPPHSVQSSLA) the composition is skewed to polar residues. Serine 2447 carries the phosphoserine modification. Positions 2488–2497 (GGGGGGGVGQ) are enriched in gly residues. The span at 2598 to 2619 (PPSIQSSMSGSSPSTNMLSPSS) shows a compositional bias: low complexity. Polar residues predominate over residues 2632 to 2653 (PSSQHSGGHTPQHLVQTLDSYP). Positions 2659–2675 (SPGHWSSSSPRSNSDWS) are enriched in low complexity. Polar residues predominate over residues 2677-2687 (GVQSPAANNLY).

The protein belongs to the NOTCH family. As to quaternary structure, homomer. Interacts with Su(H) when activated. Interacts with Dx via its ANK repeats. Interacts with Delta via the EGF repeats and the Delta EGF repeats. Interacts with Nedd4 and Su(dx). Interacts with O-fut1; the interaction glycosylates N and transports N to early endosomes. Interacts with Akap200; the interaction stabilizes N/Notch protein levels by preventing Cbl-mediated ubiquitination and subsequent lysosomal degradation of N/Notch. Upon binding its ligands such as Delta or Serrate, it is cleaved (S2 cleavage) in its extracellular domain, close to the transmembrane domain. S2 cleavage is probably mediated by Kuz. It is then cleaved (S3 cleavage) downstream of its transmembrane domain, releasing it from the cell membrane. S3 cleavage requires Psn. In terms of processing, O-glycosylated. Three forms of O-glycosylation (O-fucosylation, O-glucosylation and O-GlcNAcylation) are detected. O-fucosylated by O-fut1 and fng in the EGF repeat domain inhibits both Serrate/Ser- and Delta/Dl-binding. O-glucosylation by rumi in the endoplasmic reticulum is necessary for correct folding and signaling. Post-translationally, ubiquitinated by various ubiquitin ligases; which promotes ligand-independent endocytosis and proteasomal degradation. Ubiquitinated by Nedd4. May also be ubiquitinated by Su(dx) and Cbl. Mono-ubiquitinated, possibly by dx/deltex; this may be involved in the ESCRT-III mediated targeting to multivesicular bodies.

It localises to the cell membrane. Its subcellular location is the endosome. The protein resides in the multivesicular body. It is found in the nucleus. Essential signaling protein which has a major role in many developmental processes. Functions as a receptor for membrane-bound ligands Delta and Serrate to regulate cell-fate determination. Upon ligand activation, and releasing from the cell membrane, the Notch intracellular domain (NICD) forms a transcriptional activator complex with Su(H) (Suppressor of hairless) and activates genes of the E(spl) complex. Regulates oogenesis, the differentiation of the ectoderm and the development of the central and peripheral nervous system, eye, wing disk, muscles and segmental appendages such as antennae and legs, through lateral inhibition or induction. Regulates neuroblast self-renewal, identity and proliferation through the regulation of bHLH-O proteins; in larval brains, involved in the maintenance of type II neuroblast self-renewal and identity by suppressing erm expression together with pnt; might also regulate dpn expression through the activation of the transcriptional regulator Su(H). Targeted for ESCRT-mediated endosomal sequestration and lysosomal degradation by various E3 ubiquitin ligases to regulate the Notch signaling pathway. Can undergo ligand-dependent and non-canonical ligand-independent activation. Ligand-independent activation is dependent on endosome acidification and probably occurs in late endosomes or lysosome. Ectopic ligand-independent activation occurs when disruption of the endolysosomal pathway, particularly of the ESCRT-III complex, prevents sequestration of the receptor in intraluminal vesicles of multivesicular bodies. This Drosophila melanogaster (Fruit fly) protein is Neurogenic locus Notch protein.